Reading from the N-terminus, the 194-residue chain is Isopentenyl-diphosphate Delta-isomerase (194 aa).

Mn(2+) contacts are provided by His-27 and His-34. Residues 32–166 form the Nudix hydrolase domain; that stretch reads ALHLAFSCHV…PWAFSPWLTL (135 aa). Cys-69 is a catalytic residue. Residue His-71 participates in Mn(2+) binding. Glu-89 contributes to the Mg(2+) binding site. Positions 116 and 118 each coordinate Mn(2+). Glu-118 is an active-site residue.

Belongs to the IPP isomerase type 1 family. Requires Mg(2+) as cofactor. Mn(2+) is required as a cofactor.

It localises to the cytoplasm. It carries out the reaction isopentenyl diphosphate = dimethylallyl diphosphate. The protein operates within isoprenoid biosynthesis; dimethylallyl diphosphate biosynthesis; dimethylallyl diphosphate from isopentenyl diphosphate: step 1/1. Functionally, catalyzes the 1,3-allylic rearrangement of the homoallylic substrate isopentenyl (IPP) to its highly electrophilic allylic isomer, dimethylallyl diphosphate (DMAPP). The sequence is that of Isopentenyl-diphosphate Delta-isomerase from Clavibacter michiganensis subsp. michiganensis (strain NCPPB 382).